The sequence spans 423 residues: Histidine--tRNA ligase (423 aa).

The protein belongs to the class-II aminoacyl-tRNA synthetase family. In terms of assembly, homodimer.

The protein resides in the cytoplasm. The enzyme catalyses tRNA(His) + L-histidine + ATP = L-histidyl-tRNA(His) + AMP + diphosphate + H(+). The sequence is that of Histidine--tRNA ligase (hisS) from Mycobacterium bovis (strain ATCC BAA-935 / AF2122/97).